Consider the following 246-residue polypeptide: Metallo-beta-lactamase type 2 (246 aa).

The signal sequence occupies residues 1–20 (MKKLFVLCVCFFCSITAAGA). Residues His95, His97, Asp99, His157, and Cys176 each contribute to the Zn(2+) site. Asp99 is an a beta-lactam binding site. A beta-lactam contacts are provided by Lys179 and Asn185. His215 serves as a coordination point for Zn(2+).

It belongs to the metallo-beta-lactamase superfamily. Class-B beta-lactamase family. As to quaternary structure, monomer. It depends on Zn(2+) as a cofactor.

The protein localises to the periplasm. The catalysed reaction is a beta-lactam + H2O = a substituted beta-amino acid. Confers resistance to the different beta-lactam antibiotics (penicillin, cephalosporin and carbapenem) via the hydrolysis of the beta-lactam ring. Exhibits higher catalytic efficiency toward ticarcillin and piperacillin than blaIMP-1. Exhibits catalytic activity for carbapenem compounds, but has a preference for imipenem and ertapenem over meropenem. Has high efficiency for the hydrolysis of cefuroxime. Exhibits hydrolysis of all cephalosporins tested. Exhibits no hydrolysis of temocillin, the 6-alpha-methoxy semisynthetic derivative of ticarcillin. This chain is Metallo-beta-lactamase type 2, found in Pseudomonas aeruginosa.